The sequence spans 152 residues: Small ribosomal subunit protein uS13z/uS13y/uS13x (152 aa).

An N-acetylserine modification is found at Ser-2.

Belongs to the universal ribosomal protein uS13 family.

The protein localises to the cytoplasm. Functionally, located at the top of the head of the 40S subunit, it contacts several helices of the 18S rRNA. This is Small ribosomal subunit protein uS13z/uS13y/uS13x (RPS18A) from Arabidopsis thaliana (Mouse-ear cress).